Here is a 337-residue protein sequence, read N- to C-terminus: Putative olfactory receptor 1F12P (337 aa).

Residues 1–25 (MEGKNQTNISEFLLLGFSSWQQQQV) are Extracellular-facing. 2 N-linked (GlcNAc...) asparagine glycosylation sites follow: N5 and N8. A helical membrane pass occupies residues 26–49 (LLFALFLCLYLTGLFGNLLILLAI). Topologically, residues 50–57 (GSDHCLHT) are cytoplasmic. The chain crosses the membrane as a helical span at residues 58–79 (PMYFFLANLSLVDLCLPSATVP). Topologically, residues 80-100 (KMLLNIQTQTQTISYPGCLAQ) are extracellular. Residues C97 and C189 are joined by a disulfide bond. Residues 101–120 (MYFCMMFANMDNFLLTVMAY) form a helical membrane-spanning segment. At 121–139 (DRYVAICHPLHYSTIMALR) the chain is on the cytoplasmic side. Residues 140–158 (LCASLVAAPWVIAILNPLL) traverse the membrane as a helical segment. Over 159–196 (HTLMMAHLHFCSDNVIHHFFCDINSLLPLSCSDTSLNQ) the chain is Extracellular. A helical transmembrane segment spans residues 197 to 219 (LSVLATVGLIFVVPSVCILVSYI). Residues 220–236 (LIVSAVMKVPSAQGKLK) lie on the Cytoplasmic side of the membrane. A helical transmembrane segment spans residues 237–259 (AFSTCGSHLALVILFYGAITGVY). Residues 260-272 (MSPLSNHSTEKDS) are Extracellular-facing. The N-linked (GlcNAc...) asparagine glycan is linked to N265. The helical transmembrane segment at 273–292 (AASVIFMVVAPVLNPFIYSL) threads the bilayer. At 293 to 337 (RNNELKGTLKKTLSRPGAVAHACNPSTLGGRGGWIMRSGDRDHPG) the chain is on the cytoplasmic side.

The protein belongs to the G-protein coupled receptor 1 family.

Its subcellular location is the cell membrane. Its function is as follows. Odorant receptor. The polypeptide is Putative olfactory receptor 1F12P (Homo sapiens (Human)).